The primary structure comprises 437 residues: GTPase Obg (437 aa).

The Obg domain occupies 2 to 160; that stretch reads SMFLDTAKIS…RQLELELKIL (159 aa). One can recognise an OBG-type G domain in the interval 161–338; it reads ADVGLVGFPS…LLEATAELLA (178 aa). Residues 167 to 174, 192 to 196, 214 to 217, 284 to 287, and 319 to 321 contribute to the GTP site; these read GFPSVGKS, FTTIV, DLPG, NKMD, and SSL. Residues S174 and T194 each contribute to the Mg(2+) site. The OCT domain occupies 359 to 437; that stretch reads GFAETEKNFE…IGKFEFEFVD (79 aa).

Belongs to the TRAFAC class OBG-HflX-like GTPase superfamily. OBG GTPase family. As to quaternary structure, monomer. Mg(2+) is required as a cofactor.

The protein resides in the cytoplasm. An essential GTPase which binds GTP, GDP and possibly (p)ppGpp with moderate affinity, with high nucleotide exchange rates and a fairly low GTP hydrolysis rate. Plays a role in control of the cell cycle, stress response, ribosome biogenesis and in those bacteria that undergo differentiation, in morphogenesis control. The sequence is that of GTPase Obg from Streptococcus pyogenes serotype M49 (strain NZ131).